The sequence spans 197 residues: Phospholipid hydroperoxide glutathione peroxidase (197 aa).

S40 carries the phosphoserine modification. Residue U73 is part of the active site. A non-standard amino acid (selenocysteine) is located at residue U73.

This sequence belongs to the glutathione peroxidase family. In terms of assembly, monomer. Has a tendency to form higher mass oligomers. Interacts with FUNDC1; this interaction promotes GPX4 recruitment into mitochondria through TOM/TIM complex where it is degraded by mitophagy.

It is found in the mitochondrion. Its subcellular location is the cytoplasm. The enzyme catalyses a hydroperoxy polyunsaturated fatty acid + 2 glutathione = a hydroxy polyunsaturated fatty acid + glutathione disulfide + H2O. It carries out the reaction 2 glutathione + H2O2 = glutathione disulfide + 2 H2O. The catalysed reaction is tert-butyl hydroperoxide + 2 glutathione = tert-butanol + glutathione disulfide + H2O. It catalyses the reaction cumene hydroperoxide + 2 glutathione = 2-phenylpropan-2-ol + glutathione disulfide + H2O. The enzyme catalyses (9S)-hydroperoxy-(10E,12Z)-octadecadienoate + 2 glutathione = (9S)-hydroxy-(10E,12Z)-octadecadienoate + glutathione disulfide + H2O. It carries out the reaction (13S)-hydroperoxy-(9Z,11E)-octadecadienoate + 2 glutathione = (13S)-hydroxy-(9Z,11E)-octadecadienoate + glutathione disulfide + H2O. The catalysed reaction is (5S)-hydroperoxy-(6E,8Z,11Z,14Z)-eicosatetraenoate + 2 glutathione = (5S)-hydroxy-(6E,8Z,11Z,14Z)-eicosatetraenoate + glutathione disulfide + H2O. It catalyses the reaction (12R)-hydroperoxy-(5Z,8Z,10E,14Z)-eicosatetraenoate + 2 glutathione = (12R)-hydroxy-(5Z,8Z,10E,14Z)-eicosatetraenoate + glutathione disulfide + H2O. The enzyme catalyses (12S)-hydroperoxy-(5Z,8Z,10E,14Z)-eicosatetraenoate + 2 glutathione = (12S)-hydroxy-(5Z,8Z,10E,14Z)-eicosatetraenoate + glutathione disulfide + H2O. It carries out the reaction (15S)-hydroperoxy-(5Z,8Z,11Z,13E)-eicosatetraenoate + 2 glutathione = (15S)-hydroxy-(5Z,8Z,11Z,13E)-eicosatetraenoate + glutathione disulfide + H2O. The catalysed reaction is (5S)-hydroperoxy-(6E,8Z,11Z,14Z,17Z)-eicosapentaenoate + 2 glutathione = (5S)-hydroxy-(6E,8Z,11Z,14Z,17Z)-eicosapentaenoate + glutathione disulfide + H2O. It catalyses the reaction (12S)-hydroperoxy-(5Z,8Z,10E,14Z,17Z)-eicosapentaenoate + 2 glutathione = (12S)-hydroxy-(5Z,8Z,10E,14Z,17Z)-eicosapentaenoate + glutathione disulfide + H2O. The enzyme catalyses (15S)-hydroperoxy-(5Z,8Z,11Z,13E,17Z)-eicosapentaenoate + 2 glutathione = (15S)-hydroxy-(5Z,8Z,11Z,13E,17Z)-eicosapentaenoate + glutathione disulfide + H2O. It carries out the reaction (15S)-hydroperoxy-(11Z,13E)-eicosadienoate + 2 glutathione = (15S)-hydroxy-(11Z,13E)-eicosadienoate + glutathione disulfide + H2O. The catalysed reaction is (17S)-hydroperoxy-(4Z,7Z,10Z,13Z,15E,19Z)-docosahexaenoate + 2 glutathione = (17S)-hydroxy-(4Z,7Z,10Z,13Z,15E,19Z)-docosahexaenoate + glutathione disulfide + H2O. It catalyses the reaction a hydroperoxy-1,2-diacyl-glycero-3-phosphocholine + 2 glutathione = a hydroxy-1,2-diacyl-glycero-3-phosphocholine + glutathione disulfide + H2O. Functionally, essential antioxidant peroxidase that directly reduces phospholipid hydroperoxide even if they are incorporated in membranes and lipoproteins. Can also reduce fatty acid hydroperoxide, cholesterol hydroperoxide and thymine hydroperoxide. Plays a key role in protecting cells from oxidative damage by preventing membrane lipid peroxidation. Required to prevent cells from ferroptosis, a non-apoptotic cell death resulting from an iron-dependent accumulation of lipid reactive oxygen species. The presence of selenocysteine (Sec) versus Cys at the active site is essential for life: it provides resistance to overoxidation and prevents cells against ferroptosis. The presence of Sec at the active site is also essential for the survival of a specific type of parvalbumin-positive interneurons, thereby preventing against fatal epileptic seizures. May be required to protect cells from the toxicity of ingested lipid hydroperoxides. Required for normal sperm development and male fertility. Essential for maturation and survival of photoreceptor cells. Plays a role in a primary T-cell response to viral and parasitic infection by protecting T-cells from ferroptosis and by supporting T-cell expansion. Plays a role of glutathione peroxidase in platelets in the arachidonic acid metabolism. Reduces hydroperoxy ester lipids formed by a 15-lipoxygenase that may play a role as down-regulator of the cellular 15-lipoxygenase pathway. Can also reduce small soluble hydroperoxides such as H2O2, cumene hydroperoxide and tert-butyl hydroperoxide. This chain is Phospholipid hydroperoxide glutathione peroxidase, found in Hylobates lar (Lar gibbon).